We begin with the raw amino-acid sequence, 493 residues long: L-arabinose isomerase 1 (493 aa).

Residues Glu301, Glu326, His343, and His442 each coordinate Mn(2+).

Belongs to the arabinose isomerase family. It depends on Mn(2+) as a cofactor.

The catalysed reaction is beta-L-arabinopyranose = L-ribulose. The protein operates within carbohydrate degradation; L-arabinose degradation via L-ribulose; D-xylulose 5-phosphate from L-arabinose (bacterial route): step 1/3. In terms of biological role, catalyzes the conversion of L-arabinose to L-ribulose. The protein is L-arabinose isomerase 1 of Bacillus licheniformis (strain ATCC 14580 / DSM 13 / JCM 2505 / CCUG 7422 / NBRC 12200 / NCIMB 9375 / NCTC 10341 / NRRL NRS-1264 / Gibson 46).